The following is a 276-amino-acid chain: Formamidopyrimidine-DNA glycosylase (276 aa).

The Schiff-base intermediate with DNA role is filled by Pro2. Glu3 acts as the Proton donor in catalysis. Lys60 (proton donor; for beta-elimination activity) is an active-site residue. The DNA site is built by His93, Arg112, and Arg155. An FPG-type zinc finger spans residues 240–274; that stretch reads LVYGRKDEACTKCGAEIIRFVVGGRGTHICPDCQK. Arg264 functions as the Proton donor; for delta-elimination activity in the catalytic mechanism.

The protein belongs to the FPG family. Monomer. The cofactor is Zn(2+).

It carries out the reaction Hydrolysis of DNA containing ring-opened 7-methylguanine residues, releasing 2,6-diamino-4-hydroxy-5-(N-methyl)formamidopyrimidine.. The catalysed reaction is 2'-deoxyribonucleotide-(2'-deoxyribose 5'-phosphate)-2'-deoxyribonucleotide-DNA = a 3'-end 2'-deoxyribonucleotide-(2,3-dehydro-2,3-deoxyribose 5'-phosphate)-DNA + a 5'-end 5'-phospho-2'-deoxyribonucleoside-DNA + H(+). Its function is as follows. Involved in base excision repair of DNA damaged by oxidation or by mutagenic agents. Acts as a DNA glycosylase that recognizes and removes damaged bases. Has a preference for oxidized purines, such as 7,8-dihydro-8-oxoguanine (8-oxoG). Has AP (apurinic/apyrimidinic) lyase activity and introduces nicks in the DNA strand. Cleaves the DNA backbone by beta-delta elimination to generate a single-strand break at the site of the removed base with both 3'- and 5'-phosphates. The sequence is that of Formamidopyrimidine-DNA glycosylase from Brevibacillus brevis (strain 47 / JCM 6285 / NBRC 100599).